The sequence spans 125 residues: uncharacterized protein (125 aa).

Polar residues predominate over residues 1–33; sequence MLPHQNSSYTRQGTNDAQANDMRSPSQLPTSVN. 2 disordered regions span residues 1 to 35 and 44 to 63; these read MLPH…VNIE and SEKL…KKHT. Positions 53-63 are enriched in basic residues; the sequence is NRSRSGIKKHT.

This is an uncharacterized protein from Schizosaccharomyces pombe (strain 972 / ATCC 24843) (Fission yeast).